The primary structure comprises 301 residues: Asialoglycoprotein receptor 2 (301 aa).

The disordered stretch occupies residues 1–29 (MEKDFQDIQQLDSEENDHQLIGDEEQGSH). Over 1–58 (MEKDFQDIQQLDSEENDHQLIGDEEQGSHVQNLRTENPRWGGQPPSRPFPQRLCSKFR) the chain is Cytoplasmic. Phosphoserine is present on S13. The S-palmitoyl cysteine moiety is linked to residue C54. Residues 59–79 (LSLLALAFNILLLVVICVVSS) form a helical; Signal-anchor for type II membrane protein membrane-spanning segment. Residues 80–301 (QSMQLQKEFW…ACERKRDITY (222 aa)) are Extracellular-facing. N97, N119, and N165 each carry an N-linked (GlcNAc...) asparagine glycan. A C-type lectin domain is found at 169–295 (CCPVNWVEFG…QQVNRWACER (127 aa)). Intrachain disulfides connect C170–C181, C198–C293, and C271–C285.

In terms of assembly, interacts with LASS2. As to expression, expressed exclusively in hepatic parenchymal cells.

The protein localises to the membrane. Mediates the endocytosis of plasma glycoproteins to which the terminal sialic acid residue on their complex carbohydrate moieties has been removed. The receptor recognizes terminal galactose and N-acetylgalactosamine units. After ligand binding to the receptor, the resulting complex is internalized and transported to a sorting organelle, where receptor and ligand are disassociated. The receptor then returns to the cell membrane surface. The chain is Asialoglycoprotein receptor 2 (Asgr2) from Rattus norvegicus (Rat).